The chain runs to 66 residues: Hirudin-PA (66 aa).

Residues 1–3 (ITY) are interaction with thrombin active site. Cystine bridges form between Cys-6–Cys-14, Cys-16–Cys-28, and Cys-22–Cys-39. The tract at residues 39–66 (CVTGEGTPKPQSHNQGDFEPIPEDAYDE) is disordered. Thr-45 carries an O-linked (GalNAc...) threonine glycan. The interaction with fibrinogen-binding exosite of thrombin stretch occupies residues 55–66 (DFEPIPEDAYDE). Tyr-64 carries the sulfotyrosine modification.

It belongs to the protease inhibitor I14 (hirudin) family.

Its subcellular location is the secreted. In terms of biological role, hirudin is a potent thrombin-specific protease inhibitor. It forms a stable non-covalent complex with alpha-thrombin, thereby abolishing its ability to cleave fibrinogen. The polypeptide is Hirudin-PA (Hirudo medicinalis (Medicinal leech)).